We begin with the raw amino-acid sequence, 388 residues long: MADTTILDTTCSSTLAANVEFSHATDSAIGISLKNATITEAEGVPNLKETGYDCVRYMGTCNGGQIYLGRERKKLKDYVAIKKFAIDDVDDYAAIAKESSNLRLMHHPNIIELCECFVYERSIYQITPAMNLGSLFDIVFEYMKWGINEKSAAAITRQLLDALSYLHQRRYIHRDLKPKHILIDSSGNVKLSGFRFMIELNHHLDCVFEFDAHLQNQLYYLAPEVLAQNIHGYTSKSDIYMLGISICEAINGVMPFGELEPLEMLHRKLNGQVPRPVDMISLKDDQKMGLDISHRPQEHLTRRFSKEMHEFIANCLDYDPQQRGSASDLKSSAWLGSKIHKNLGPVDVRQELNLDYAHFDLSLWEQEPLIPMEPDQKYEIVFDYSPIS.

Residues 52–335 form the Protein kinase domain; it reads YDCVRYMGTC…ASDLKSSAWL (284 aa). ATP contacts are provided by residues 58–66 and Lys82; that span reads MGTCNGGQI.

It belongs to the protein kinase superfamily. STE Ser/Thr protein kinase family. STE20 subfamily. Interacts with sad-1. Interacts with par-4. As to expression, expressed in nervous system, pharynx and excretory canal. Expressed in germline.

The protein resides in the perikaryon. Its subcellular location is the nucleus. The protein localises to the cell projection. It is found in the dendrite. It localises to the axon. The protein resides in the synapse. Its subcellular location is the cytoplasm. The protein localises to the cell cortex. Functionally, pseudokinase which may act as an adapter for kinases sad-1 and par-4 and thereby is involved in several developmental processes. Regulates cell-autonomously both neuronal polarity and synaptic organization when bound to sad-1. Required for sad-1 localization to synapses. Required to establish germline stem cell (GSC) quiescence during dauer development, to promote cell shedding during embryogenesis and to control asymmetric cell division of the Q.p neuroblast lineage, probably when bound to par-4. May be involved in maintaining the integrity of the early embryonic cortex when bound to par-4. The sequence is that of STE20-related kinase adapter protein strd-1 from Caenorhabditis elegans.